The chain runs to 1029 residues: MAEEDAEKAFFQAQTMNAESVDYKAVEEHGADSSDSDDYDPSKTLQDQYSSSMTDLKQSENVSSSASPEPNPTEQNSVQPDHDPSQPDGASYPSQTPPRDESRTSTMVPTSGTSVQPKTRTIGGFVVEDEDEDDAGDADYEPPAVLGVEDMNTVATNVPQQSVSGNENEASSTPDVSLDDAAQQSASLNNVSHNSYSPAPAVAPKSDVAVAAGQSLYNSHALQSGNVQDSATATPTPDSPSTSKGRLPHDRVGILEDRIQEDPRGDIPAWLELINEHRSRNRFDSARDVFERFLKVFPFAAEQWVAYAKMESELNDLYRLEQIFNRTLLTIPDVQLWSVYLDYVRRRNPLTTDTTGQARRIISSAYELAFQHIGVDKDSGSIWSDYVQFIKSGPGNVGGSGWQDQQKMDLLRKAYQKAICVPTQAVNTLWKEYDQFEMGLNKLTGRKFLQEQSPAYMTARSSYTELQNITRDLIRTTLPRLPPVPGSDGDIEFTQQVDIWKRWIKWEKGDPLVLKEEDPAAFKGRVVYVYKQALMALRFLPEMWFDAAEFCFLNDLESEGNEFLKQGMEANPESCLLAFKRADRLEITSESEQDPIKRGAKVREPYDKLLDALYDLIAKARTREAQDVARLEETFAKMNADNPPAKTDDDDDDQSESKARESVKNAQIDAVRKAHAIQIGILSKTISFAWIALMRAMRRIQGKGKPGETPGSRQVFADARKRGRITSDVYIASALIEYHCYKDPAATKIFERGAKLFPDDENFALEYLKHLIDINDIINARAVFEMTVRKLASNPDNVHKTKPIFAFLHEYESRYGDLVQVINLENRMRELFPEDPTLEQFAHRYSAPTFDPTAVRPIISPSQMRPKAVFPTSEQPMSRHGTPTPRYPGSVTDSPKRPLEDFDDDYNRPRKFVRAESPLKTSQRRQLDQQKRSQLSNVQTGSQFRSQGSPAPLPRDIVHLLSIIPPASAYTAGRFSPEKLVDLIRRIEMPSSISQIPLPQSARGLGTTQTPMQPFSGKASPSLSVRAVY.

Disordered stretches follow at residues 1–177 (MAEE…PDVS) and 225–251 (GNVQDSATATPTPDSPSTSKGRLPHDR). The span at 21–32 (VDYKAVEEHGAD) shows a compositional bias: basic and acidic residues. 2 stretches are compositionally biased toward polar residues: residues 43–79 (KTLQDQYSSSMTDLKQSENVSSSASPEPNPTEQNSVQ) and 104–119 (TSTMVPTSGTSVQPKT). Residues 127-140 (VEDEDEDDAGDADY) are compositionally biased toward acidic residues. Over residues 153–175 (TVATNVPQQSVSGNENEASSTPD) the composition is skewed to polar residues. Over residues 229 to 243 (DSATATPTPDSPSTS) the composition is skewed to low complexity. 6 HAT repeats span residues 281–313 (NRFDSARDVFERFLKVFPFAAEQWVAYAKMESE), 315–346 (NDLYRLEQIFNRTLLTIPDVQLWSVYLDYVRR), 357–392 (QARRIISSAYELAFQHIGVDKDSGSIWSDYVQFIKS), 406–439 (QKMDLLRKAYQKAICVPTQAVNTLWKEYDQFEMG), 469–509 (ITRD…WEKG), and 521–553 (AFKGRVVYVYKQALMALRFLPEMWFDAAEFCFL). 3 disordered regions span residues 634–664 (TFAKMNADNPPAKTDDDDDDQSESKARESVK), 853–951 (TAVR…GSPA), and 996–1023 (IPLPQSARGLGTTQTPMQPFSGKASPSL). Positions 894 to 908 (SPKRPLEDFDDDYNR) are enriched in basic and acidic residues. Composition is skewed to polar residues over residues 932-949 (RSQLSNVQTGSQFRSQGS) and 1006-1023 (GTTQTPMQPFSGKASPSL).

It localises to the nucleus. The protein resides in the cytoplasm. Its function is as follows. Component of the cleavage factor IA (CFIA) complex, which is involved in the endonucleolytic cleavage during polyadenylation-dependent pre-mRNA 3'-end formation. In Aspergillus fumigatus (strain ATCC MYA-4609 / CBS 101355 / FGSC A1100 / Af293) (Neosartorya fumigata), this protein is mRNA 3'-end-processing protein rna14 (rna14).